We begin with the raw amino-acid sequence, 205 residues long: MTKIVRSKYKASRRLGVSLWGDSKDAFNTRNYRPGQHGQNTMIKTSDYGLHLKAKQRLKCYYGRVTEKQFRNIFALAQRMKGNTGENFIGLLESRLDTVVYRMNIAPTIFAARQLVSHGHIKLNGKKADIASIRLKEGDIIEIKESIQQIPLIQESISKQGQTTPGYLSFDIPSLTGKYLRVPALSDVPYPFEAEVHLVIELYSR.

The region spanning 94–157 (SRLDTVVYRM…QQIPLIQESI (64 aa)) is the S4 RNA-binding domain.

It belongs to the universal ribosomal protein uS4 family. Part of the 30S ribosomal subunit. Contacts protein S5. The interaction surface between S4 and S5 is involved in control of translational fidelity.

Its function is as follows. One of the primary rRNA binding proteins, it binds directly to 16S rRNA where it nucleates assembly of the body of the 30S subunit. In terms of biological role, with S5 and S12 plays an important role in translational accuracy. The chain is Small ribosomal subunit protein uS4 from Rickettsia prowazekii (strain Madrid E).